The following is a 235-amino-acid chain: Uridylate kinase (235 aa).

Residue 9-12 (KLSG) coordinates ATP. Gly51 is a binding site for UMP. The ATP site is built by Gly52 and Arg56. UMP is bound by residues Asp71 and 132-139 (TGNPYFTT). Residues Thr159, Tyr165, and Asp168 each contribute to the ATP site.

Belongs to the UMP kinase family. As to quaternary structure, homohexamer.

It localises to the cytoplasm. It catalyses the reaction UMP + ATP = UDP + ADP. Its pathway is pyrimidine metabolism; CTP biosynthesis via de novo pathway; UDP from UMP (UMPK route): step 1/1. Its activity is regulated as follows. Inhibited by UTP. In terms of biological role, catalyzes the reversible phosphorylation of UMP to UDP. This is Uridylate kinase from Christiangramia forsetii (strain DSM 17595 / CGMCC 1.15422 / KT0803) (Gramella forsetii).